A 270-amino-acid polypeptide reads, in one-letter code: Oxidized low-density lipoprotein receptor 1 (270 aa).

Basic and acidic residues predominate over residues 1–14; the sequence is MTVDDPKGMKDQLD. The segment at 1–22 is disordered; sequence MTVDDPKGMKDQLDQKPNGKTA. Residues 1–33 are Cytoplasmic-facing; the sequence is MTVDDPKGMKDQLDQKPNGKTAKGFVSSWRWYP. A helical; Signal-anchor for type II membrane protein membrane pass occupies residues 34–56; it reads AAVTLGVLCLGLLVTVILLILQL. Cys-42 carries S-palmitoyl cysteine lipidation. The tract at residues 57-146 is neck; it reads SQVSDLIKKQ…SGPCPQDWLW (90 aa). Residues 57-270 are Extracellular-facing; sequence SQVSDLIKKQ…QKKANLLRAQ (214 aa). N-linked (GlcNAc...) asparagine glycans are attached at residues Asn-69 and Asn-135. Residues 85–135 adopt a coiled-coil conformation; sequence RRSEKSAQESQKELKEMIETLAHKLDEKSKKLMELHRQNLNLQEVLKEAAN. 3 cysteine pairs are disulfide-bonded: Cys-140–Cys-151, Cys-168–Cys-260, and Cys-239–Cys-252. One can recognise a C-type lectin domain in the interval 147-261; it reads HEENCYQFSS…CILTAFSICQ (115 aa).

In terms of assembly, homodimer; disulfide-linked. May form a hexamer composed of 3 homodimers. Interacts with HSP70. Post-translationally, N-glycosylated. As to expression, highly expressed in endothelial cells, aortic intima and lung. Expressed at low level in other tissues.

Its subcellular location is the cell membrane. It is found in the membrane raft. The protein resides in the secreted. Functionally, receptor that mediates the recognition, internalization and degradation of oxidatively modified low density lipoprotein (oxLDL) by vascular endothelial cells. OxLDL is a marker of atherosclerosis that induces vascular endothelial cell activation and dysfunction, resulting in pro-inflammatory responses, pro-oxidative conditions and apoptosis. Its association with oxLDL induces the activation of NF-kappa-B through an increased production of intracellular reactive oxygen and a variety of pro-atherogenic cellular responses including a reduction of nitric oxide (NO) release, monocyte adhesion and apoptosis. In addition to binding oxLDL, it acts as a receptor for the HSP70 protein involved in antigen cross-presentation to naive T-cells in dendritic cells, thereby participating in cell-mediated antigen cross-presentation. Also involved in inflammatory process, by acting as a leukocyte-adhesion molecule at the vascular interface in endotoxin-induced inflammation. Also acts as a receptor for advanced glycation end (AGE) products, activated platelets, monocytes, apoptotic cells and both Gram-negative and Gram-positive bacteria. The protein is Oxidized low-density lipoprotein receptor 1 (OLR1) of Bos taurus (Bovine).